Here is a 245-residue protein sequence, read N- to C-terminus: Transmembrane and ubiquitin-like domain-containing protein 1 (245 aa).

Residues 2-30 form a required to release iHOPS from membranes region; the sequence is ALIEGVGDEVTVLFSVLACLLVLALAWVS. The chain crosses the membrane as a helical span at residues 11–31; it reads VTVLFSVLACLLVLALAWVST. Residues 34 to 51 show a composition bias toward polar residues; it reads TESTDPLPQSSGTTTPAQ. Residues 34–100 are disordered; that stretch reads TESTDPLPQS…ASTPPDSPQE (67 aa). 3 positions are modified to phosphoserine: Ser-73, Ser-97, and Ser-126. The Ubiquitin-like domain maps to 102–175; the sequence is LLLRLKFLND…LHCHVSTRVG (74 aa). 2 consecutive transmembrane segments (helical) span residues 194 to 214 and 219 to 239; these read IGSL…YCQI and FFPL…SLLA.

In terms of assembly, interacts with EEF1A1, GRIA2, GRIP1. Interacts with CAMLG, TUBG1. Interacts with NPM1 and CDKN2A; TMUB1 can enhance interaction between NPM1 and CDKN2A and is proposed to bridge the proteins; proposed to be mediated by iHOPS. Interacts with ERLIN2 and AMFR; TMUB1 promotes the interaction of ERLIN2 with AMFR. Processed by regulated intramembrane proteolysis (RIP) in the N-terminus to release iHOPS from membranes.

It is found in the membrane. Its subcellular location is the postsynaptic cell membrane. It localises to the recycling endosome. The protein localises to the cytoplasm. The protein resides in the cytoskeleton. It is found in the microtubule organizing center. Its subcellular location is the centrosome. It localises to the nucleus. The protein localises to the nucleolus. In terms of biological role, involved in sterol-regulated ubiquitination and degradation of HMG-CoA reductase HMGCR. Involved in positive regulation of AMPA-selective glutamate receptor GRIA2 recycling to the cell surface. Acts as a negative regulator of hepatocyte growth during regeneration. Functionally, may contribute to the regulation of translation during cell-cycle progression. May contribute to the regulation of cell proliferation. May be involved in centrosome assembly. Modulates stabilization and nucleolar localization of tumor suppressor CDKN2A and enhances association between CDKN2A and NPM1. This chain is Transmembrane and ubiquitin-like domain-containing protein 1 (Tmub1), found in Rattus norvegicus (Rat).